Reading from the N-terminus, the 436-residue chain is Histone acetyltransferase RTT109 (436 aa).

Positions S2–H404 constitute a Rtt109-type HAT domain. Acetyl-CoA-binding positions include A88 to T90 and R97 to R101. The segment at R128–R170 is interaction with VPS75. Residues F192, A196, H211–L213, and W221 each bind acetyl-CoA. D288 acts as the Proton donor/acceptor in catalysis. At K290 the chain carries N6-acetyllysine; by autocatalysis. Residues L419–L433 are interaction with ASF1.

Belongs to the RTT109 family. Forms a complex composed of two RTT109 subunits and one VPS75 homodimer; each RTT109 subunit interacts predominantly with VPS75 instead of interacting with the other RTT109 subunit. Interacts with VPS75; the interaction is direct. Interacts (via C-terminus) with ASF1; the interaction is direct. Interacts with histone H3/H4 heterodimers via histone H3.

Its subcellular location is the nucleus. The catalysed reaction is L-lysyl-[histone] + acetyl-CoA = N(6)-acetyl-L-lysyl-[histone] + CoA + H(+). The enzyme catalyses L-lysyl-[protein] + acetyl-CoA = N(6)-acetyl-L-lysyl-[protein] + CoA + H(+). Histone chaperone-dependent acetylase that modifies 'Lys-9', 'Lys-14', 'Lys-23', 'Lys-27', and 'Lys-56' on histone H3 (H3K9Ac, H3K14Ac and H3K23Ac, H3K27Ac, and H3K56Ac) to promote nucleosome assembly, genomic stability, DNA repair and transcriptional regulation during mitotic S-phase. Its residue selectivity is influenced by the acetylation status of histone H3, and also the presence of histone chaperone ASF1 that shifts selectivity to 'Lys-56' when H3K14Ac is already present. H3K56 acetylation weakens the interaction between the histone core and the surrounding DNA in the nucleosomal particle and drives chromatin disassembly. Autoacetylates. Independently of acetyltransferase activity, stimulates histone deposition by VPS75. Involved in regulation of Ty1 transposition. This chain is Histone acetyltransferase RTT109, found in Saccharomyces cerevisiae (strain ATCC 204508 / S288c) (Baker's yeast).